The following is a 183-amino-acid chain: Translocon-associated protein subunit beta (183 aa).

Residues 1–17 form the signal peptide; it reads MRLLAFAVLALFAVTQA. The Lumenal portion of the chain corresponds to 18 to 146; that stretch reads EEGARLLASK…REFDRRFSPH (129 aa). Asn-88 carries an N-linked (GlcNAc...) asparagine glycan. A helical membrane pass occupies residues 147–167; it reads FLDWAAFGVMTLPSIGVPLLL. Residues 168-183 lie on the Cytoplasmic side of the membrane; sequence WYSSKRKYDTPKTKKN.

Belongs to the TRAP-beta family. Heterotetramer of TRAP-alpha, TRAP-beta, TRAP-delta and TRAP-gamma. Interacts with STING1.

The protein localises to the endoplasmic reticulum membrane. Its function is as follows. TRAP proteins are part of a complex whose function is to bind calcium to the ER membrane and thereby regulate the retention of ER resident proteins. The sequence is that of Translocon-associated protein subunit beta (SSR2) from Bos taurus (Bovine).